We begin with the raw amino-acid sequence, 353 residues long: Guanine nucleotide-binding protein subunit beta-5 (353 aa).

7 WD repeats span residues 61–100, 103–142, 151–192, 194–236, 237–276, 278–320, and 323–352; these read GHGNKVLCMDWCKDKRRIVSSSQDGKVIVWDSFTTNKEHA, MPCTWVMACAYAPSGCAIACGGLDNKCSVYPLTFDKNENM, MHTN…QSFH, HGAD…QAFE, THESDINSVRYYPSGDAFASGSDDATCRLYDLRADREVAI, SKES…RVSI, and GHENRVSTLRVSPDGTAFCSGSWDHTLRVW.

This sequence belongs to the WD repeat G protein beta family. As to quaternary structure, component of a complex composed of RGS9 (isoform RGS9-1), GNB5 and RGS9BP; within this complex, the presence of GNB5 stabilizes both itself and RGS9 and increases RGS9 GTPase-activating protein (GAP) activity. Interacts with RGS7, forming the RGS7-GNB5 complex; within this complex, the presence of GNB5 increases RGS7 GTPase-activating protein (GAP) activity. Interacts with GPR158; promotes the GTPase activator activity of the RGS7-GNB5 complex in absence of glycine, in contrast GTPase activator activity of the RGS7-GNB5 complex is inhibited in presence of glycine. Interacts with RGS6.

The protein resides in the membrane. Functionally, enhances GTPase-activating protein (GAP) activity of regulator of G protein signaling (RGS) proteins, such as RGS7 and RGS9, hence involved in the termination of the signaling initiated by the G protein coupled receptors (GPCRs) by accelerating the GTP hydrolysis on the G-alpha subunits, thereby promoting their inactivation. Increases RGS7 GTPase-activating protein (GAP) activity, thereby regulating mood and cognition. Increases RGS9 GTPase-activating protein (GAP) activity, hence contributes to the deactivation of G protein signaling initiated by D(2) dopamine receptors. May play an important role in neuronal signaling, including in the parasympathetic, but not sympathetic, control of heart rate. This chain is Guanine nucleotide-binding protein subunit beta-5 (GNB5), found in Oryctolagus cuniculus (Rabbit).